Consider the following 129-residue polypeptide: Ribosome-binding factor A (129 aa).

It belongs to the RbfA family. As to quaternary structure, monomer. Binds 30S ribosomal subunits, but not 50S ribosomal subunits or 70S ribosomes.

The protein localises to the cytoplasm. In terms of biological role, one of several proteins that assist in the late maturation steps of the functional core of the 30S ribosomal subunit. Associates with free 30S ribosomal subunits (but not with 30S subunits that are part of 70S ribosomes or polysomes). Required for efficient processing of 16S rRNA. May interact with the 5'-terminal helix region of 16S rRNA. The sequence is that of Ribosome-binding factor A from Marinomonas sp. (strain MWYL1).